Consider the following 342-residue polypeptide: Porphobilinogen deaminase (342 aa).

An S-(dipyrrolylmethanemethyl)cysteine modification is found at cysteine 249. The disordered stretch occupies residues 323–342; sequence AAAKQGAAEDGAADSAATGE.

It belongs to the HMBS family. As to quaternary structure, monomer. Dipyrromethane serves as cofactor.

It catalyses the reaction 4 porphobilinogen + H2O = hydroxymethylbilane + 4 NH4(+). It participates in porphyrin-containing compound metabolism; protoporphyrin-IX biosynthesis; coproporphyrinogen-III from 5-aminolevulinate: step 2/4. Tetrapolymerization of the monopyrrole PBG into the hydroxymethylbilane pre-uroporphyrinogen in several discrete steps. This Paraburkholderia phytofirmans (strain DSM 17436 / LMG 22146 / PsJN) (Burkholderia phytofirmans) protein is Porphobilinogen deaminase.